The following is a 345-amino-acid chain: MLLLGLLLLTSALAGRRHGAAAESDLSSKFSFPGAKEQNGVQDPQHEKIITVTSNGSIHSPKFPHTYPRNTVLVWRLVAVDENVWIQLTFDERFGLEDPEDDICKYDFVEVEEPSDGTVLGRWCGSSSVPSRQISKGNQIRIRFVSDEYFPSQPGFCIHYTLLVPHHTEAPSPSSLPPSALPLDVLNNAVAGFSTVEELIRYLEPDRWQLDLEDLYRPTWQLLGKAYIHGRKSRVVDLNLLKEEVRLYSCTPRNFSVSLREELKRTDTIFWPLCLLVKRCGGNCACCHQNCNECQCIPTKVTKKYHEVLQLKPRSGVRGLHKSLTDVPLEHHEECDCVCKGNSEG.

Residues 1 to 22 form the signal peptide; that stretch reads MLLLGLLLLTSALAGRRHGAAA. In terms of domain architecture, CUB spans 46-163; that stretch reads HEKIITVTSN…PGFCIHYTLL (118 aa). Asn55 carries an N-linked (GlcNAc...) asparagine glycan. 4 disulfides stabilise this stretch: Cys104-Cys124, Cys250-Cys294, Cys280-Cys335, and Cys287-Cys337.

Belongs to the PDGF/VEGF growth factor family. In terms of assembly, homodimer; disulfide-linked. Interacts with PDGFRA homodimers, and with heterodimers formed by PDGFRA and PDGFRB. In terms of processing, proteolytic removal of the N-terminal CUB domain releasing the core domain is necessary for unmasking the receptor-binding epitopes of the core domain. Cleavage after basic residues in the hinge region (region connecting the CUB and growth factor domains) gives rise to the receptor-binding form.

The protein localises to the secreted. Growth factor that plays an essential role in the regulation of embryonic development, cell proliferation, cell migration, survival and chemotaxis. Potent mitogen and chemoattractant for cells of mesenchymal origin. Required for normal skeleton formation during embryonic development. Required for normal skin morphogenesis during embryonic development. Plays an important role in wound healing, in angiogenesis and blood vessel development. The polypeptide is Platelet-derived growth factor C (PDGFC) (Gallus gallus (Chicken)).